A 146-amino-acid chain; its full sequence is MQGLSFTFSAVTLFLVLCLQLGIIESQDDENVRKPLLIEIDVPSTAQENQEITVQVTVETQYRECMVIKAYLVSNEPMEGAFNYVQTRCLCNDHPIRFFWDIIITRTVTFATVIDIVREKNICPNDMAVVPITANRYYTYNTVRMN.

Residues 1-26 form the signal peptide; it reads MQGLSFTFSAVTLFLVLCLQLGIIES. A Pyrrolidone carboxylic acid modification is found at Gln-27. 2 cysteine pairs are disulfide-bonded: Cys-65-Cys-91 and Cys-89-Cys-123.

Belongs to the PIP family. As to quaternary structure, monomer. Interacts with AZGP1. Lacrimal and submaxillary glands.

The protein resides in the secreted. This is Prolactin-inducible protein homolog (Pip) from Mus musculus (Mouse).